A 632-amino-acid polypeptide reads, in one-letter code: 1-deoxy-D-xylulose-5-phosphate synthase (632 aa).

Thiamine diphosphate is bound by residues His73 and 114–116 (SHA). Asp146 lines the Mg(2+) pocket. Residues 147–148 (GA), Asn176, Tyr287, and Glu368 each bind thiamine diphosphate. Asn176 lines the Mg(2+) pocket.

Belongs to the transketolase family. DXPS subfamily. In terms of assembly, homodimer. Requires Mg(2+) as cofactor. It depends on thiamine diphosphate as a cofactor.

It catalyses the reaction D-glyceraldehyde 3-phosphate + pyruvate + H(+) = 1-deoxy-D-xylulose 5-phosphate + CO2. Its pathway is metabolic intermediate biosynthesis; 1-deoxy-D-xylulose 5-phosphate biosynthesis; 1-deoxy-D-xylulose 5-phosphate from D-glyceraldehyde 3-phosphate and pyruvate: step 1/1. In terms of biological role, catalyzes the acyloin condensation reaction between C atoms 2 and 3 of pyruvate and glyceraldehyde 3-phosphate to yield 1-deoxy-D-xylulose-5-phosphate (DXP). This Corynebacterium glutamicum (strain R) protein is 1-deoxy-D-xylulose-5-phosphate synthase.